The sequence spans 222 residues: Peptide methionine sulfoxide reductase MsrA (222 aa).

Cys55 is an active-site residue.

The protein belongs to the MsrA Met sulfoxide reductase family.

It carries out the reaction L-methionyl-[protein] + [thioredoxin]-disulfide + H2O = L-methionyl-(S)-S-oxide-[protein] + [thioredoxin]-dithiol. The enzyme catalyses [thioredoxin]-disulfide + L-methionine + H2O = L-methionine (S)-S-oxide + [thioredoxin]-dithiol. Functionally, has an important function as a repair enzyme for proteins that have been inactivated by oxidation. Catalyzes the reversible oxidation-reduction of methionine sulfoxide in proteins to methionine. This is Peptide methionine sulfoxide reductase MsrA from Streptomyces griseus subsp. griseus (strain JCM 4626 / CBS 651.72 / NBRC 13350 / KCC S-0626 / ISP 5235).